The following is a 238-amino-acid chain: CD209 antigen-like protein A (238 aa).

Over 1-51 (MSDSKEMGKRQLRPLDEELLTSSHTRHSIKGFGFQTNSGFSSFTGCLVHSQ) the chain is Cytoplasmic. A helical; Signal-anchor for type II membrane protein membrane pass occupies residues 52–72 (VPLALQVLFLAVCSVLLVVIL). Topologically, residues 73 to 238 (VKVYKIPSSQ…KKLSTSCPSK (166 aa)) are extracellular. A disulfide bridge connects residues Cys-108 and Cys-119. The 115-residue stretch at 115-229 (FQGSCYFFSV…CTNKKFWICK (115 aa)) folds into the C-type lectin domain. The N-linked (GlcNAc...) asparagine glycan is linked to Asn-130. Intrachain disulfides connect Cys-136–Cys-228 and Cys-207–Cys-220. Ca(2+) is bound by residues Glu-198, Asn-200, Leu-202, Glu-205, Asn-216, and Asp-217. N-linked (GlcNAc...) asparagine glycosylation is present at Asn-216.

In terms of tissue distribution, predominantly expressed in dendritic cells. Detected at very low levels in lung, spleen, lymph nodes and bone marrow.

It localises to the membrane. Probable pathogen-recognition receptor. May mediate the endocytosis of pathogens which are subsequently degraded in lysosomal compartments. May recognize in a calcium-dependent manner high mannose N-linked oligosaccharides in a variety of pathogen antigens. This is CD209 antigen-like protein A (Cd209a) from Mus musculus (Mouse).